The chain runs to 155 residues: UPF0260 protein Smed_0627 (155 aa).

Belongs to the UPF0260 family.

The chain is UPF0260 protein Smed_0627 from Sinorhizobium medicae (strain WSM419) (Ensifer medicae).